Reading from the N-terminus, the 210-residue chain is Fibroblast growth factor 8 (210 aa).

A signal peptide spans Met1–Gln27.

It belongs to the heparin-binding growth factors family. As to quaternary structure, monomer. Homodimer.

It is found in the secreted. Plays an important role in the regulation of embryonic development, cell proliferation, cell differentiation and cell migration. Required for Kupffer's vesicle ciliogenesis. This Danio rerio (Zebrafish) protein is Fibroblast growth factor 8.